Consider the following 425-residue polypeptide: Multifunctional CCA protein (425 aa).

Residues Gly-8 and Arg-11 each contribute to the ATP site. CTP contacts are provided by Gly-8 and Arg-11. Residues Glu-21 and Asp-23 each contribute to the Mg(2+) site. 3 residues coordinate ATP: Arg-91, Arg-137, and Arg-140. Residues Arg-91, Arg-137, and Arg-140 each coordinate CTP. The HD domain maps to 228–329 (TGVHTLMVLD…VDLLDRLGAL (102 aa)).

It belongs to the tRNA nucleotidyltransferase/poly(A) polymerase family. Bacterial CCA-adding enzyme type 1 subfamily. Monomer. Can also form homodimers and oligomers. It depends on Mg(2+) as a cofactor. Ni(2+) serves as cofactor.

It carries out the reaction a tRNA precursor + 2 CTP + ATP = a tRNA with a 3' CCA end + 3 diphosphate. The enzyme catalyses a tRNA with a 3' CCA end + 2 CTP + ATP = a tRNA with a 3' CCACCA end + 3 diphosphate. In terms of biological role, catalyzes the addition and repair of the essential 3'-terminal CCA sequence in tRNAs without using a nucleic acid template. Adds these three nucleotides in the order of C, C, and A to the tRNA nucleotide-73, using CTP and ATP as substrates and producing inorganic pyrophosphate. tRNA 3'-terminal CCA addition is required both for tRNA processing and repair. Also involved in tRNA surveillance by mediating tandem CCA addition to generate a CCACCA at the 3' terminus of unstable tRNAs. While stable tRNAs receive only 3'-terminal CCA, unstable tRNAs are marked with CCACCA and rapidly degraded. The chain is Multifunctional CCA protein from Methylococcus capsulatus (strain ATCC 33009 / NCIMB 11132 / Bath).